We begin with the raw amino-acid sequence, 276 residues long: MRLVILDNYDLASEWAAKYICNRIIQFRPGQDRYFTLGLPTGSTPLGCYKKLIEYHKNGDLSFKYVKTFNMDEYVGLPRNHPESYHSYMWNNFFKHIDIDPNNAHILDGNATDLQAECDAFEKKIKEAGGIDLFVGGIGPDGHIAFNEPGSSLVSRTRLKTLAMDTILANAKYFDGDLSKVPTMALTVGVGTVMDAREVMILITGAHKAFALYKAIEEGVNHMWTVSAFQQHPRTIFVCDEDATLELRVKTVKYFKGLMHVHNKLVDPLYSMKEGN.

D72 (proton acceptor; for enolization step) is an active-site residue. Residues 106 to 130 are a coiled coil; it reads ILDGNATDLQAECDAFEKKIKEAGG. D141 functions as the For ring-opening step in the catalytic mechanism. H143 functions as the Proton acceptor; for ring-opening step in the catalytic mechanism. E148 acts as the For ring-opening step in catalysis. At T161 the chain carries Phosphothreonine.

This sequence belongs to the glucosamine/galactosamine-6-phosphate isomerase family. In terms of assembly, homohexamer.

It is found in the cytoplasm. It catalyses the reaction alpha-D-glucosamine 6-phosphate + H2O = beta-D-fructose 6-phosphate + NH4(+). Its pathway is nucleotide-sugar biosynthesis; UDP-N-acetyl-alpha-D-glucosamine biosynthesis; alpha-D-glucosamine 6-phosphate from D-fructose 6-phosphate: step 1/1. Allosterically activated by N-acetylglucosamine-6-phosphate (GlcNAc6P). Its function is as follows. Catalyzes the reversible conversion of alpha-D-glucosamine 6-phosphate (GlcN-6P) into beta-D-fructose 6-phosphate (Fru-6P) and ammonium ion, a regulatory reaction step in de novo uridine diphosphate-N-acetyl-alpha-D-glucosamine (UDP-GlcNAc) biosynthesis via hexosamine pathway. Deamination is coupled to aldo-keto isomerization mediating the metabolic flux from UDP-GlcNAc toward Fru-6P. At high ammonium level can drive amination and isomerization of Fru-6P toward hexosamines and UDP-GlcNAc synthesis. Has a role in fine tuning the metabolic fluctuations of cytosolic UDP-GlcNAc and their effects on hyaluronan synthesis that occur during tissue remodeling. The protein is Glucosamine-6-phosphate deaminase 2 of Bos taurus (Bovine).